The chain runs to 282 residues: Shikimate dehydrogenase (NADP(+)) (282 aa).

Shikimate-binding positions include 15-17 (SKS) and Thr-62. Residue Lys-66 is the Proton acceptor of the active site. Shikimate is bound by residues Asn-87 and Asp-103. NADP(+)-binding positions include 127–131 (GAGGA), 151–156 (NRTHTK), and Met-220. Tyr-222 is a shikimate binding site. Gly-244 lines the NADP(+) pocket.

It belongs to the shikimate dehydrogenase family. As to quaternary structure, homodimer.

It carries out the reaction shikimate + NADP(+) = 3-dehydroshikimate + NADPH + H(+). The protein operates within metabolic intermediate biosynthesis; chorismate biosynthesis; chorismate from D-erythrose 4-phosphate and phosphoenolpyruvate: step 4/7. Its function is as follows. Involved in the biosynthesis of the chorismate, which leads to the biosynthesis of aromatic amino acids. Catalyzes the reversible NADPH linked reduction of 3-dehydroshikimate (DHSA) to yield shikimate (SA). In Shewanella baltica (strain OS185), this protein is Shikimate dehydrogenase (NADP(+)).